The primary structure comprises 328 residues: Probable tRNA pseudouridine synthase B (328 aa).

Aspartate 71 (nucleophile) is an active-site residue. Residues 238–313 (LPKIWVRDSA…LVARVDRVIM (76 aa)) enclose the PUA domain.

The protein belongs to the pseudouridine synthase TruB family. Type 2 subfamily.

It catalyses the reaction uridine(55) in tRNA = pseudouridine(55) in tRNA. In terms of biological role, could be responsible for synthesis of pseudouridine from uracil-55 in the psi GC loop of transfer RNAs. The polypeptide is Probable tRNA pseudouridine synthase B (Pyrobaculum islandicum (strain DSM 4184 / JCM 9189 / GEO3)).